Consider the following 129-residue polypeptide: Large ribosomal subunit protein bL12 (129 aa).

It belongs to the bacterial ribosomal protein bL12 family. Homodimer. Part of the ribosomal stalk of the 50S ribosomal subunit. Forms a multimeric L10(L12)X complex, where L10 forms an elongated spine to which 2 to 4 L12 dimers bind in a sequential fashion. Binds GTP-bound translation factors.

Functionally, forms part of the ribosomal stalk which helps the ribosome interact with GTP-bound translation factors. Is thus essential for accurate translation. This Fervidobacterium nodosum (strain ATCC 35602 / DSM 5306 / Rt17-B1) protein is Large ribosomal subunit protein bL12.